We begin with the raw amino-acid sequence, 118 residues long: Vesicle-associated membrane protein 1 (118 aa).

Residues M1–A15 show a composition bias toward low complexity. The interval M1–Q38 is disordered. At M1–K96 the chain is on the cytoplasmic side. A compositionally biased stretch (polar residues) spans T28 to Q38. One can recognise a v-SNARE coiled-coil homology domain in the interval R33–K93. S63 is modified (phosphoserine). A helical; Anchor for type IV membrane protein membrane pass occupies residues M97–I116. Residues F117–T118 are Vesicular-facing.

Belongs to the synaptobrevin family. In terms of assembly, interacts with VAPA and VAPB. In terms of processing, (Microbial infection) Targeted and hydrolyzed by C.botulinum neurotoxin type D (BoNT/D, botD) which hydrolyzes the 61-Lys-|-Leu-62 bond and inhibits neurotransmitter release. This is a poor substrate for BoNT/D, high concentrations are required to cleave it in vitro. (Microbial infection) Targeted and hydrolyzed by C.botulinum neurotoxin type F (BoNT/F, botF) which hydrolyzes the 60-Gln-|-Lys-61 bond and inhibits neurotransmitter release. Expressed in brain and spleen (at protein level). Isoform 1 expressed at very high level in brain. Even higher level found in spinal cord. Isoform 3 expressed in kidney, spleen and liver. Isoforms 2 and 3 expressed in osteoblasts of trabecular bone. Also expressed in heart.

The protein resides in the cytoplasmic vesicle. Its subcellular location is the secretory vesicle. The protein localises to the synaptic vesicle membrane. It is found in the synapse. It localises to the synaptosome. The protein resides in the cytoplasmic vesicle membrane. Its subcellular location is the mitochondrion outer membrane. Functionally, involved in the targeting and/or fusion of transport vesicles to their target membrane. In Rattus norvegicus (Rat), this protein is Vesicle-associated membrane protein 1 (Vamp1).